Reading from the N-terminus, the 306-residue chain is Methionyl-tRNA formyltransferase (306 aa).

110-113 is a (6S)-5,6,7,8-tetrahydrofolate binding site; it reads SLLP.

Belongs to the Fmt family.

The enzyme catalyses L-methionyl-tRNA(fMet) + (6R)-10-formyltetrahydrofolate = N-formyl-L-methionyl-tRNA(fMet) + (6S)-5,6,7,8-tetrahydrofolate + H(+). In terms of biological role, attaches a formyl group to the free amino group of methionyl-tRNA(fMet). The formyl group appears to play a dual role in the initiator identity of N-formylmethionyl-tRNA by promoting its recognition by IF2 and preventing the misappropriation of this tRNA by the elongation apparatus. The polypeptide is Methionyl-tRNA formyltransferase (Brucella ovis (strain ATCC 25840 / 63/290 / NCTC 10512)).